Here is a 317-residue protein sequence, read N- to C-terminus: Glucokinase (317 aa).

This sequence belongs to the ROK (NagC/XylR) family. As to quaternary structure, homodimer. Requires a divalent metal cation as cofactor.

It catalyses the reaction D-glucose + ATP = D-glucose 6-phosphate + ADP + H(+). Catalyzes the phosphorylation of D-glucose to D-glucose 6-phosphate using ATP as the phosphate donor. Can also phosphorylate 2-deoxyglucose, with lower efficiency. ITP can also serve as a phosphoryl donor. The chain is Glucokinase from Thermotoga maritima (strain ATCC 43589 / DSM 3109 / JCM 10099 / NBRC 100826 / MSB8).